The primary structure comprises 81 residues: ATP synthase subunit c (81 aa).

2 helical membrane passes run 7 to 27 (AASV…PGIG) and 57 to 77 (LAFM…LLFA).

This sequence belongs to the ATPase C chain family. In terms of assembly, F-type ATPases have 2 components, F(1) - the catalytic core - and F(0) - the membrane proton channel. F(1) has five subunits: alpha(3), beta(3), gamma(1), delta(1), epsilon(1). F(0) has four main subunits: a(1), b(1), b'(1) and c(10-14). The alpha and beta chains form an alternating ring which encloses part of the gamma chain. F(1) is attached to F(0) by a central stalk formed by the gamma and epsilon chains, while a peripheral stalk is formed by the delta, b and b' chains.

It localises to the cellular thylakoid membrane. F(1)F(0) ATP synthase produces ATP from ADP in the presence of a proton or sodium gradient. F-type ATPases consist of two structural domains, F(1) containing the extramembraneous catalytic core and F(0) containing the membrane proton channel, linked together by a central stalk and a peripheral stalk. During catalysis, ATP synthesis in the catalytic domain of F(1) is coupled via a rotary mechanism of the central stalk subunits to proton translocation. Functionally, key component of the F(0) channel; it plays a direct role in translocation across the membrane. A homomeric c-ring of between 10-14 subunits forms the central stalk rotor element with the F(1) delta and epsilon subunits. In Synechococcus sp. (strain CC9311), this protein is ATP synthase subunit c.